We begin with the raw amino-acid sequence, 141 residues long: Nucleoside diphosphate kinase (141 aa).

The ATP site is built by K9, F57, R85, T91, R102, and N112. The Pros-phosphohistidine intermediate role is filled by H115.

This sequence belongs to the NDK family. As to quaternary structure, homotetramer. Requires Mg(2+) as cofactor.

Its subcellular location is the cytoplasm. It catalyses the reaction a 2'-deoxyribonucleoside 5'-diphosphate + ATP = a 2'-deoxyribonucleoside 5'-triphosphate + ADP. The enzyme catalyses a ribonucleoside 5'-diphosphate + ATP = a ribonucleoside 5'-triphosphate + ADP. Functionally, major role in the synthesis of nucleoside triphosphates other than ATP. The ATP gamma phosphate is transferred to the NDP beta phosphate via a ping-pong mechanism, using a phosphorylated active-site intermediate. The sequence is that of Nucleoside diphosphate kinase from Chlamydia muridarum (strain MoPn / Nigg).